The primary structure comprises 297 residues: Bifonsecin B biosynthesis cluster protein A (297 aa).

The signal sequence occupies residues 1–20 (MHFWWTAISAGLLCLPQALG). N-linked (GlcNAc...) asparagine glycans are attached at residues Asn-26, Asn-56, Asn-75, Asn-124, Asn-175, Asn-210, and Asn-280.

The protein belongs to the bfoA family.

Functionally, part of the gene cluster that mediates the biosynthesis of bifonsecin B, a dimeric gamma-naphthopyrone. The first step in the biosynthesis of bifonsecin B is the production of gamma-naphthopyrone precursor YWA1 by the non-reducing polyketide synthase albA, via condensation of one acetyl-CoA starter unit with 6 malonyl-CoA units. YWA1 is then methylated by bfoE at position C-6 to yield foncesin which is further methylated at position C-8 by bfoD to produce fonsecin B. A key enzyme in the biosynthetic pathway is the cytochrome P450 monooxygenase bfoB which catalyzes the oxidative dimerization of fonsecin B to bifonsecin B. Bfob also catalyzes the oxidative dimerization of rubrofusarin B into nigerone. The stereoselectivity of bfoB is influenced by the two natural monomeric substrates; homodimerization of fonsecin B yields a stereochemically pure biaryl, M-foncerine B, while rubrofusarin B yields a mixture of enantiomers M- and P-nigerone. The function of bfoA within the bifonsecin B biosynthesis pathway has not been determined yet. This chain is Bifonsecin B biosynthesis cluster protein A, found in Aspergillus brasiliensis (strain CBS 101740 / IMI 381727 / IBT 21946).